We begin with the raw amino-acid sequence, 221 residues long: D-glycero-alpha-D-manno-heptose 1-phosphate guanylyltransferase (221 aa).

Belongs to the D-alpha-D-heptose-1-P guanylyltransferase family.

It carries out the reaction D-glycero-alpha-D-manno-heptose 1-phosphate + GTP + H(+) = GDP-D-glycero-alpha-D-manno-heptose + diphosphate. The protein operates within nucleotide-sugar biosynthesis; GDP-D-glycero-alpha-D-manno-heptose biosynthesis; GDP-D-glycero-alpha-D-manno-heptose from D-glycero-alpha-D-manno-heptose 7-phosphate: step 3/3. It participates in capsule biogenesis; capsule polysaccharide biosynthesis. In terms of biological role, catalyzes the GDP transfer from GTP to D-glycero-alpha-D-manno-heptose 1-phosphate, yielding GDP-D-alpha-D-heptose. Is able to use ATP, CTP or UTP as substrate in the presence of pyrophosphatase, but at a significantly slower rate. Can also form GDP-alpha-D-mannose from alpha-D-mannose 1-phosphate and GTP. This Campylobacter jejuni subsp. jejuni serotype O:2 (strain ATCC 700819 / NCTC 11168) protein is D-glycero-alpha-D-manno-heptose 1-phosphate guanylyltransferase.